Reading from the N-terminus, the 99-residue chain is UPF0213 protein spr1390 (99 aa).

The GIY-YIG domain maps to 3-78; it reads HKAYMYVLEC…KRKKRPQKEE (76 aa).

The protein belongs to the UPF0213 family.

This Streptococcus pneumoniae (strain ATCC BAA-255 / R6) protein is UPF0213 protein spr1390.